Consider the following 453-residue polypeptide: Elongation factor 1-alpha (453 aa).

The 226-residue stretch at 5–230 (KTHINIVVIG…DAIVEPKRPH (226 aa)) folds into the tr-type G domain. The tract at residues 14-21 (GHVDAGKS) is G1. Residue 14–21 (GHVDAGKS) coordinates GTP. Positions 70–74 (GITID) are G2. Residues 91–94 (DAPG) form a G3 region. Residues 91-95 (DAPGH) and 153-156 (NKMD) contribute to the GTP site. Residues 153-156 (NKMD) form a G4 region. The tract at residues 194 to 196 (SGW) is G5.

The protein belongs to the TRAFAC class translation factor GTPase superfamily. Classic translation factor GTPase family. EF-Tu/EF-1A subfamily. Binds to actin.

The protein resides in the cytoplasm. Functionally, this protein promotes the GTP-dependent binding of aminoacyl-tRNA to the A-site of ribosomes during protein biosynthesis. It is also an abundant actin filament bundling protein. This chain is Elongation factor 1-alpha (eef1a2), found in Dictyostelium discoideum (Social amoeba).